The chain runs to 612 residues: Peroxisomal carnitine O-octanoyltransferase (612 aa).

At methionine 1 the chain carries N-acetylmethionine. N6-succinyllysine is present on residues lysine 40 and lysine 57. The Proton acceptor role is filled by histidine 327. CoA is bound by residues lysine 406 and 410–417 (KNKMLHPD). N6-acetyllysine; alternate is present on lysine 406. At lysine 406 the chain carries N6-succinyllysine; alternate. 3 residues coordinate (R)-carnitine: tyrosine 439, threonine 441, and threonine 452. The short motif at 610-612 (THL) is the Microbody targeting signal element.

This sequence belongs to the carnitine/choline acetyltransferase family. Monomer.

It localises to the peroxisome. The catalysed reaction is octanoyl-CoA + (R)-carnitine = O-octanoyl-(R)-carnitine + CoA. It catalyses the reaction 4,8-dimethylnonanoyl-CoA + (R)-carnitine = O-4,8-dimethylnonanoyl-(R)-carnitine + CoA. The protein operates within lipid metabolism; fatty acid beta-oxidation. In terms of biological role, beta-oxidation of fatty acids. The highest activity concerns the C6 to C10 chain length substrate. Converts the end product of pristanic acid beta oxidation, 4,8-dimethylnonanoyl-CoA, to its corresponding carnitine ester. The protein is Peroxisomal carnitine O-octanoyltransferase (CROT) of Homo sapiens (Human).